The chain runs to 647 residues: Protein arginine N-methyltransferase 7 (647 aa).

SAM-dependent MTase PRMT-type domains follow at residues 12-332 and 337-647; these read EREW…FSLW and GKDK…SEDS. Active-site residues include Glu-140 and Glu-149.

This sequence belongs to the class I-like SAM-binding methyltransferase superfamily. Protein arginine N-methyltransferase family. PRMT7 subfamily.

In terms of biological role, arginine methyltransferase that can both catalyze the formation of omega-N monomethylarginine (MMA) and symmetrical dimethylarginine (sDMA). The polypeptide is Protein arginine N-methyltransferase 7 (prmt-7) (Caenorhabditis elegans).